A 470-amino-acid polypeptide reads, in one-letter code: Zinc finger CCCH domain-containing protein 7 (470 aa).

The tract at residues 122-144 is disordered; sequence AYSKKESEKQSGQNNTSTASRNH. Polar residues predominate over residues 131-142; the sequence is QSGQNNTSTASR. C3H1-type zinc fingers lie at residues 240-269, 273-294, 295-321, 322-349, and 350-372; these read AKKK…HDPS, VCTK…HKVI, PERM…HVHV, NPIA…HSYN, and CPVF…HPKN. Residues 370 to 381 show a composition bias toward basic residues; that stretch reads PKNQSKGRKRKR. The interval 370–389 is disordered; that stretch reads PKNQSKGRKRKRTNEPSQKN.

Its function is as follows. Possesses RNA-binding and ribonuclease activities in vitro. The protein is Zinc finger CCCH domain-containing protein 7 of Arabidopsis thaliana (Mouse-ear cress).